Here is a 248-residue protein sequence, read N- to C-terminus: tRNA (guanine-N(7)-)-methyltransferase (248 aa).

The S-adenosyl-L-methionine site is built by Glu80, Glu105, Asp132, and Asp155. Asp155 is a catalytic residue. Residues Lys159, Asp191, and 223–226 contribute to the substrate site; that span reads TKFE.

It belongs to the class I-like SAM-binding methyltransferase superfamily. TrmB family.

The catalysed reaction is guanosine(46) in tRNA + S-adenosyl-L-methionine = N(7)-methylguanosine(46) in tRNA + S-adenosyl-L-homocysteine. The protein operates within tRNA modification; N(7)-methylguanine-tRNA biosynthesis. In terms of biological role, catalyzes the formation of N(7)-methylguanine at position 46 (m7G46) in tRNA. The protein is tRNA (guanine-N(7)-)-methyltransferase of Nocardioides sp. (strain ATCC BAA-499 / JS614).